Reading from the N-terminus, the 783-residue chain is Glucosidase YgjK (783 aa).

The signal sequence occupies residues 1–22; the sequence is MKIKTILTPVTCALLISFSAHA. Positions 24 to 254 are N-terminal domain; sequence NADNYKNVIN…TTLYTTYSHL (231 aa). The linker stretch occupies residues 254–299; it reads LLTAQEVSKEQMQIRDILARPAFYLTASQQRWEEYLKKGLTNPDAT. The a domain stretch occupies residues 300 to 783; that stretch reads PEQTRVAVKA…MLYNDFFRKQ (484 aa). Ca(2+) is bound by residues D454, N456, N458, V460, and E462. D524 acts as the Proton donor in catalysis. A Ca(2+)-binding site is contributed by E572. Residue E750 is the Proton acceptor of the active site.

Belongs to the glycosyl hydrolase 63 family.

Functionally, glucoside hydrolase that cleaves the alpha-1,3-glucosidic linkage in nigerose. Has very low activity towards maltooligosaccharides, soluble starch, nigerotriose, kojibiose and trehalose. The protein is Glucosidase YgjK (ygjK) of Escherichia coli (strain K12).